Consider the following 26-residue polypeptide: Dermaseptin-J3 (26 aa).

Residue Val-26 is modified to Valine amide.

As to expression, expressed by the skin glands.

It localises to the secreted. Its function is as follows. Has antimicrobial activity. The polypeptide is Dermaseptin-J3 (Phasmahyla jandaia (Jandaia leaf frog)).